Consider the following 111-residue polypeptide: Universal stress protein B (111 aa).

2 helical membrane-spanning segments follow: residues 1–21 (MIST…NMAR) and 90–110 (FILT…LMLW).

It belongs to the universal stress protein B family.

The protein resides in the cell inner membrane. The chain is Universal stress protein B from Yersinia pseudotuberculosis serotype O:1b (strain IP 31758).